We begin with the raw amino-acid sequence, 487 residues long: L-tartrate/succinate antiporter (487 aa).

The next 14 membrane-spanning stretches (helical) occupy residues 10 to 30 (YLAP…AGLE), 33 to 53 (TWLY…EPVP), 54 to 74 (GAVV…WLLF), 93 to 113 (WAVS…FMFG), 137 to 157 (TLFL…VTPS), 189 to 209 (IGSY…AIFL), 236 to 256 (FLGM…LAYV), 292 to 312 (LMVG…AAMV), 313 to 333 (GYSV…DIVS), 340 to 360 (VFFW…TGFI), 370 to 390 (SLSG…FYLL), 393 to 413 (FFAS…AAAL), 418 to 438 (IPLP…SILT), and 465 to 485 (IFGL…MPVV).

This sequence belongs to the SLC13A/DASS transporter (TC 2.A.47) family. DIT1 subfamily.

Its subcellular location is the cell inner membrane. It catalyses the reaction (2R,3R)-tartrate(out) + succinate(in) = (2R,3R)-tartrate(in) + succinate(out). In terms of biological role, catalyzes the uptake of tartrate in exchange for intracellular succinate. Essential for anaerobic L-tartrate fermentation. This Escherichia coli O6:K15:H31 (strain 536 / UPEC) protein is L-tartrate/succinate antiporter (ttdT).